Reading from the N-terminus, the 393-residue chain is Selenide, water dikinase (393 aa).

Residues 1 to 21 (MSEKEGKVIPETNGMKRPRFD) form a disordered region. Residue Cys-42 is part of the active site. ATP-binding positions include Lys-45, 68 to 70 (GMD), Asp-93, Asp-116, and 167 to 170 (GGQT). Residue Asp-70 coordinates Mg(2+). Position 116 (Asp-116) interacts with Mg(2+). A Mg(2+)-binding site is contributed by Asp-273.

Belongs to the selenophosphate synthase 1 family. Class I subfamily. Homodimer. Requires Mg(2+) as cofactor.

The enzyme catalyses hydrogenselenide + ATP + H2O = selenophosphate + AMP + phosphate + 2 H(+). Synthesizes selenophosphate from selenide and ATP. This is Selenide, water dikinase from Trypanosoma brucei brucei (strain 927/4 GUTat10.1).